An 89-amino-acid chain; its full sequence is Pigment dispersing factor homolog pdf-2 (89 aa).

The N-terminal stretch at 1-27 (MSSRISVSLLLLAVVATMFFTANVVDA) is a signal peptide.

Functionally, probable ligand of isoforms a and b of the calcitonin receptor-like protein, pdfr-1, a G-protein coupled receptor. May not signal through isoform c of pdfr-1. Involved in locomotion; may play a role in circadian rhythms of locomotor activity. Modulator of egg-laying. In Caenorhabditis elegans, this protein is Pigment dispersing factor homolog pdf-2.